A 274-amino-acid polypeptide reads, in one-letter code: Rhamnulose-1-phosphate aldolase (274 aa).

Glutamate 117 is a catalytic residue. The Zn(2+) site is built by histidine 141, histidine 143, and histidine 212.

Belongs to the aldolase class II family. RhaD subfamily. In terms of assembly, homotetramer. Zn(2+) is required as a cofactor.

The protein resides in the cytoplasm. The enzyme catalyses L-rhamnulose 1-phosphate = (S)-lactaldehyde + dihydroxyacetone phosphate. It functions in the pathway carbohydrate degradation; L-rhamnose degradation; glycerone phosphate from L-rhamnose: step 3/3. Catalyzes the reversible cleavage of L-rhamnulose-1-phosphate to dihydroxyacetone phosphate (DHAP) and L-lactaldehyde. The sequence is that of Rhamnulose-1-phosphate aldolase from Escherichia coli (strain SMS-3-5 / SECEC).